Reading from the N-terminus, the 269-residue chain is Ribosomal RNA small subunit methyltransferase A (269 aa).

Residues N18, L20, G45, E66, D91, and N112 each contribute to the S-adenosyl-L-methionine site.

The protein belongs to the class I-like SAM-binding methyltransferase superfamily. rRNA adenine N(6)-methyltransferase family. RsmA subfamily.

The protein localises to the cytoplasm. It carries out the reaction adenosine(1518)/adenosine(1519) in 16S rRNA + 4 S-adenosyl-L-methionine = N(6)-dimethyladenosine(1518)/N(6)-dimethyladenosine(1519) in 16S rRNA + 4 S-adenosyl-L-homocysteine + 4 H(+). In terms of biological role, specifically dimethylates two adjacent adenosines (A1518 and A1519) in the loop of a conserved hairpin near the 3'-end of 16S rRNA in the 30S particle. May play a critical role in biogenesis of 30S subunits. The polypeptide is Ribosomal RNA small subunit methyltransferase A (Vibrio parahaemolyticus serotype O3:K6 (strain RIMD 2210633)).